Consider the following 376-residue polypeptide: Germination-specific cysteine protease 1 (376 aa).

The N-terminal stretch at 1–22 (MAPSTKVLSLLLLYVVVSLASG) is a signal peptide. A propeptide spans 23-144 (DESIINDHLQ…KYSAAVNGKE (122 aa)) (activation peptide). Asparagine 93 carries N-linked (GlcNAc...) asparagine glycosylation. Intrachain disulfides connect cysteine 166/cysteine 208, cysteine 200/cysteine 241, and cysteine 299/cysteine 351. The active site involves cysteine 169. Residues histidine 305 and asparagine 325 contribute to the active site.

It belongs to the peptidase C1 family.

Its function is as follows. Probable thiol protease. This chain is Germination-specific cysteine protease 1, found in Arabidopsis thaliana (Mouse-ear cress).